A 544-amino-acid chain; its full sequence is MSQQHTLPVTLPPALSQELLDTVPPPVNTQQEQRKQPAALPPPCQEVPVELPVEGPSKHEEKHMTIVKGAPEQECEQQQQPQEQKLQQQHWEQDEEHQKAENPEQQLKQEKAQREKQQLQGQLEEEKKLLDQQPDHELAKSDEQLGTKKEQLLEFPEQQEGQLKCLEQQEGHLELPEQQEGQLKCLEQQEGHQELPEQQEGQLKHLEQQEGQLKHLEQQEGQVKHLEQQEKQSELPEQQRGQPKYLEQQEGQLKHLEEQKGQLKHLEHQEGQLELPEQVGQPKHLEQLEKQLEHPEQQEGQLKQLEEQEGQVKHLEQQEEQLKHLEQQEGQPKHPEQLEKQLEHPEQQEGQLKQLEEQEGQVKHLEQQEEQLKHLEQQEGQPKHLEQLEKQLEHLEQQEGQLKHLEQREEQLELPEQQVGQSKHLEQEEKQLEHPEQQEGQLKHLGKQEAQLELPEQVGQPKHLEQQEKQLEHPEQQEGQLKPQEQQEGQLKGLEQQERQLEQPVFAPAPGQVQGIQQALPPKGEVLLPVEQQQQKQEVQWQHK.

Positions 1–520 (MSQQHTLPVT…GQVQGIQQAL (520 aa)) are disordered. Residues 76-90 (EQQQQPQEQKLQQQH) show a composition bias toward low complexity. Composition is skewed to basic and acidic residues over residues 96–117 (EHQK…REKQ), 124–152 (EEEK…KEQL), 202–234 (QLKH…KQSE), 252–271 (QLKH…HQEG), 283–297 (KHLE…HPEQ), 304–347 (QLEE…HPEQ), 354–411 (QLEE…REEQ), 423–437 (KHLE…HPEQ), and 462–476 (KHLE…HPEQ). A compositionally biased stretch (low complexity) spans 477-494 (QEGQLKPQEQQEGQLKGL).

This sequence belongs to the involucrin family. As to quaternary structure, directly or indirectly cross-linked to cornifelin (CNFN). Substrate of transglutaminase. Specific glutamines or lysines are cross-linked to keratins, desmoplakin and to inter involucrin molecules. Keratinocytes of epidermis and other stratified squamous epithelia.

Its subcellular location is the cytoplasm. Functionally, part of the insoluble cornified cell envelope (CE) of stratified squamous epithelia. In Aotus trivirgatus (Three-striped night monkey), this protein is Involucrin (IVL).